The primary structure comprises 421 residues: uncharacterized protein (421 aa).

Coiled coils occupy residues 126–182 and 328–397; these read YART…IQKI and YQVE…RLTL.

This is an uncharacterized protein from Treponema pallidum (strain Nichols).